The following is a 174-amino-acid chain: Single-stranded DNA-binding protein 1 (174 aa).

The SSB domain occupies 6 to 111; that stretch reads VNKVILVGNL…VVVNVGGTMQ (106 aa). A DNA-binding region spans residues 55–61; it reads WHRVVLF. The disordered stretch occupies residues 110-174; sequence MQMLGGRQGG…PMDFDDDIPF (65 aa). The span at 115 to 133 shows a compositional bias: gly residues; it reads GRQGGGAPAGGGQQQGGWG. Positions 134–160 are enriched in low complexity; it reads QPQQPQGGNQFSGGAQSRPQQQAPAAP. Residues 169 to 174 carry the Important for interaction with partner proteins motif; that stretch reads DDDIPF.

As to quaternary structure, homotetramer. Binds PriA via its C-terminus.

Plays an important role in DNA replication, recombination and repair. Binds to ssDNA and to an array of partner proteins to recruit them to their sites of action during DNA metabolism. Stimulates the ATPase activity of PriA. One tetramer binds to 26 nucleotides (nt) of ssDNA, a 55 nt piece of ssDNA probably binds 2 tetramers. The protein is Single-stranded DNA-binding protein 1 of Klebsiella pneumoniae subsp. pneumoniae (strain ATCC 700721 / MGH 78578).